The primary structure comprises 386 residues: Chorismate synthase (386 aa).

Positions 45 and 51 each coordinate NADP(+). FMN contacts are provided by residues 131 to 133 (RTS), 251 to 252 (QG), Ser294, 309 to 313 (KPIPS), and Arg335.

Belongs to the chorismate synthase family. As to quaternary structure, homotetramer. The cofactor is FMNH2.

It carries out the reaction 5-O-(1-carboxyvinyl)-3-phosphoshikimate = chorismate + phosphate. It participates in metabolic intermediate biosynthesis; chorismate biosynthesis; chorismate from D-erythrose 4-phosphate and phosphoenolpyruvate: step 7/7. Its function is as follows. Catalyzes the anti-1,4-elimination of the C-3 phosphate and the C-6 proR hydrogen from 5-enolpyruvylshikimate-3-phosphate (EPSP) to yield chorismate, which is the branch point compound that serves as the starting substrate for the three terminal pathways of aromatic amino acid biosynthesis. This reaction introduces a second double bond into the aromatic ring system. The polypeptide is Chorismate synthase (Clostridium tetani (strain Massachusetts / E88)).